A 119-amino-acid polypeptide reads, in one-letter code: Holo-[acyl-carrier-protein] synthase (119 aa).

Residues Asp-8 and Glu-58 each coordinate Mg(2+).

This sequence belongs to the P-Pant transferase superfamily. AcpS family. Requires Mg(2+) as cofactor.

The protein localises to the cytoplasm. It carries out the reaction apo-[ACP] + CoA = holo-[ACP] + adenosine 3',5'-bisphosphate + H(+). Functionally, transfers the 4'-phosphopantetheine moiety from coenzyme A to a Ser of acyl-carrier-protein. The polypeptide is Holo-[acyl-carrier-protein] synthase (Streptococcus mutans serotype c (strain ATCC 700610 / UA159)).